The primary structure comprises 84 residues: uncharacterized protein (84 aa).

The interval Gly62–Pro84 is disordered.

This is an uncharacterized protein from Soybean chlorotic mottle virus.